Reading from the N-terminus, the 263-residue chain is Pimeloyl-[acyl-carrier protein] methyl ester esterase (263 aa).

Residues Trp-28, 86 to 87 (SL), and 149 to 153 (FLAIQ) contribute to the substrate site. Residue Ser-86 is the Nucleophile of the active site. Catalysis depends on residues Asp-213 and His-240. His-240 serves as a coordination point for substrate.

It belongs to the AB hydrolase superfamily. Carboxylesterase BioH family. As to quaternary structure, monomer.

It is found in the cytoplasm. The catalysed reaction is 6-carboxyhexanoyl-[ACP] methyl ester + H2O = 6-carboxyhexanoyl-[ACP] + methanol + H(+). It participates in cofactor biosynthesis; biotin biosynthesis. Functionally, the physiological role of BioH is to remove the methyl group introduced by BioC when the pimeloyl moiety is complete. It allows to synthesize pimeloyl-ACP via the fatty acid synthetic pathway through the hydrolysis of the ester bonds of pimeloyl-ACP esters. The sequence is that of Pimeloyl-[acyl-carrier protein] methyl ester esterase from Shewanella oneidensis (strain ATCC 700550 / JCM 31522 / CIP 106686 / LMG 19005 / NCIMB 14063 / MR-1).